The following is a 580-amino-acid chain: NADH-quinone oxidoreductase subunit C/D (580 aa).

The tract at residues 1–171 (MSLDQAIPEA…PPFVLTDRLF (171 aa)) is NADH dehydrogenase I subunit C. The segment at 195–580 (ELMVLNFGPH…IDFVMSDVDR (386 aa)) is NADH dehydrogenase I subunit D.

In the N-terminal section; belongs to the complex I 30 kDa subunit family. The protein in the C-terminal section; belongs to the complex I 49 kDa subunit family. As to quaternary structure, NDH-1 is composed of 13 different subunits. Subunits NuoB, CD, E, F, and G constitute the peripheral sector of the complex.

Its subcellular location is the cell inner membrane. It carries out the reaction a quinone + NADH + 5 H(+)(in) = a quinol + NAD(+) + 4 H(+)(out). Functionally, NDH-1 shuttles electrons from NADH, via FMN and iron-sulfur (Fe-S) centers, to quinones in the respiratory chain. The immediate electron acceptor for the enzyme in this species is believed to be ubiquinone. Couples the redox reaction to proton translocation (for every two electrons transferred, four hydrogen ions are translocated across the cytoplasmic membrane), and thus conserves the redox energy in a proton gradient. This Cereibacter sphaeroides (strain KD131 / KCTC 12085) (Rhodobacter sphaeroides) protein is NADH-quinone oxidoreductase subunit C/D.